The chain runs to 174 residues: ATP-dependent protease subunit HslV (174 aa).

Thr-4 is a catalytic residue. Na(+) contacts are provided by Ala-159, Cys-162, and Thr-165.

It belongs to the peptidase T1B family. HslV subfamily. As to quaternary structure, a double ring-shaped homohexamer of HslV is capped on each side by a ring-shaped HslU homohexamer. The assembly of the HslU/HslV complex is dependent on binding of ATP.

Its subcellular location is the cytoplasm. The enzyme catalyses ATP-dependent cleavage of peptide bonds with broad specificity.. Allosterically activated by HslU binding. Functionally, protease subunit of a proteasome-like degradation complex believed to be a general protein degrading machinery. In Moorella thermoacetica (strain ATCC 39073 / JCM 9320), this protein is ATP-dependent protease subunit HslV.